We begin with the raw amino-acid sequence, 156 residues long: Small ribosomal subunit protein uS7 (156 aa).

It belongs to the universal ribosomal protein uS7 family. Part of the 30S ribosomal subunit. Contacts proteins S9 and S11.

In terms of biological role, one of the primary rRNA binding proteins, it binds directly to 16S rRNA where it nucleates assembly of the head domain of the 30S subunit. Is located at the subunit interface close to the decoding center, probably blocks exit of the E-site tRNA. This chain is Small ribosomal subunit protein uS7, found in Heliobacterium modesticaldum (strain ATCC 51547 / Ice1).